A 170-amino-acid chain; its full sequence is Ureidoglycolate lyase 1 (170 aa).

Belongs to the ureidoglycolate lyase family. In terms of assembly, homodimer. The cofactor is Ni(2+).

The catalysed reaction is (S)-ureidoglycolate = urea + glyoxylate. The protein operates within nitrogen metabolism; (S)-allantoin degradation. Functionally, catalyzes the catabolism of the allantoin degradation intermediate (S)-ureidoglycolate, generating urea and glyoxylate. Involved in the utilization of allantoin as nitrogen source. This is Ureidoglycolate lyase 1 from Rhizobium meliloti (strain 1021) (Ensifer meliloti).